A 310-amino-acid polypeptide reads, in one-letter code: MPLRLIFMGTPDFAVPTLRELHAQGHEIAAVYTRAAKPAGRGMKLQITPVEKAARELGLPVLTPSTLRTPEAEAEFRAHNADAAVVVAYGMILPANILNAVPRGCFNLHASLLPRWRGAAPIQRAIMTGDAESGVMVMKMDVGLDTGDVAMTDRLQITDAMTAQDLHDALAPRGARLMAQAMVALEQGSLNLKPQGEEGVTYAAKIGKAEAKIDWARPAHDVLRHIHGLSPFPGAWFEVAIDGAPVRIKVLRCELVKGSGAPGALLDDRLTIACGEGAIRLLDVQRAGKQPMRALDFLRGTPLIPPLSVM.

111–114 contacts (6S)-5,6,7,8-tetrahydrofolate; the sequence is SLLP.

The protein belongs to the Fmt family.

The enzyme catalyses L-methionyl-tRNA(fMet) + (6R)-10-formyltetrahydrofolate = N-formyl-L-methionyl-tRNA(fMet) + (6S)-5,6,7,8-tetrahydrofolate + H(+). Functionally, attaches a formyl group to the free amino group of methionyl-tRNA(fMet). The formyl group appears to play a dual role in the initiator identity of N-formylmethionyl-tRNA by promoting its recognition by IF2 and preventing the misappropriation of this tRNA by the elongation apparatus. The protein is Methionyl-tRNA formyltransferase of Afipia carboxidovorans (strain ATCC 49405 / DSM 1227 / KCTC 32145 / OM5) (Oligotropha carboxidovorans).